The chain runs to 286 residues: uncharacterized protein (286 aa).

The region spanning 26 to 268 (PLIILCHGFC…DACHYDIYEG (243 aa)) is the AB hydrolase-1 domain.

This sequence belongs to the AB hydrolase superfamily.

This is an uncharacterized protein from Escherichia coli.